The primary structure comprises 688 residues: DNA ligase (688 aa).

Residues 51-55 (DSEYD), 100-101 (SL), and Glu-129 each bind NAD(+). Residue Lys-131 is the N6-AMP-lysine intermediate of the active site. Residues Arg-152, Glu-189, Lys-308, and Lys-332 each contribute to the NAD(+) site. Residues Cys-426, Cys-429, Cys-444, and Cys-450 each coordinate Zn(2+). The BRCT domain occupies 609 to 688 (ADEQPLKGQT…DELLALLANS (80 aa)).

The protein belongs to the NAD-dependent DNA ligase family. LigA subfamily. It depends on Mg(2+) as a cofactor. Mn(2+) is required as a cofactor.

The catalysed reaction is NAD(+) + (deoxyribonucleotide)n-3'-hydroxyl + 5'-phospho-(deoxyribonucleotide)m = (deoxyribonucleotide)n+m + AMP + beta-nicotinamide D-nucleotide.. Functionally, DNA ligase that catalyzes the formation of phosphodiester linkages between 5'-phosphoryl and 3'-hydroxyl groups in double-stranded DNA using NAD as a coenzyme and as the energy source for the reaction. It is essential for DNA replication and repair of damaged DNA. In Shewanella sp. (strain MR-7), this protein is DNA ligase.